A 337-amino-acid chain; its full sequence is Anthranilate phosphoribosyltransferase (337 aa).

5-phospho-alpha-D-ribose 1-diphosphate contacts are provided by residues Gly-81, 84 to 85 (GD), Ser-89, 91 to 94 (NVST), 109 to 117 (KHGNRAATS), and Ala-121. Position 81 (Gly-81) interacts with anthranilate. Ser-93 is a Mg(2+) binding site. Asn-112 is an anthranilate binding site. Residue Arg-167 participates in anthranilate binding. Residues Asp-226 and Glu-227 each coordinate Mg(2+).

This sequence belongs to the anthranilate phosphoribosyltransferase family. In terms of assembly, homodimer. The cofactor is Mg(2+).

The enzyme catalyses N-(5-phospho-beta-D-ribosyl)anthranilate + diphosphate = 5-phospho-alpha-D-ribose 1-diphosphate + anthranilate. It functions in the pathway amino-acid biosynthesis; L-tryptophan biosynthesis; L-tryptophan from chorismate: step 2/5. In terms of biological role, catalyzes the transfer of the phosphoribosyl group of 5-phosphorylribose-1-pyrophosphate (PRPP) to anthranilate to yield N-(5'-phosphoribosyl)-anthranilate (PRA). This Methylorubrum extorquens (strain CM4 / NCIMB 13688) (Methylobacterium extorquens) protein is Anthranilate phosphoribosyltransferase.